The sequence spans 434 residues: 4-hydroxy-3-methylbut-2-en-1-yl diphosphate synthase (flavodoxin) (434 aa).

Residues 1-15 show a composition bias toward polar residues; the sequence is MQSEAQSPRSSQICS. The interval 1–24 is disordered; it reads MQSEAQSPRSSQICSTEPVFGGHQ. 4 residues coordinate [4Fe-4S] cluster: Cys-322, Cys-325, Cys-368, and Glu-375.

Belongs to the IspG family. The cofactor is [4Fe-4S] cluster.

The catalysed reaction is (2E)-4-hydroxy-3-methylbut-2-enyl diphosphate + oxidized [flavodoxin] + H2O + 2 H(+) = 2-C-methyl-D-erythritol 2,4-cyclic diphosphate + reduced [flavodoxin]. Its pathway is isoprenoid biosynthesis; isopentenyl diphosphate biosynthesis via DXP pathway; isopentenyl diphosphate from 1-deoxy-D-xylulose 5-phosphate: step 5/6. Converts 2C-methyl-D-erythritol 2,4-cyclodiphosphate (ME-2,4cPP) into 1-hydroxy-2-methyl-2-(E)-butenyl 4-diphosphate. This chain is 4-hydroxy-3-methylbut-2-en-1-yl diphosphate synthase (flavodoxin), found in Burkholderia cenocepacia (strain ATCC BAA-245 / DSM 16553 / LMG 16656 / NCTC 13227 / J2315 / CF5610) (Burkholderia cepacia (strain J2315)).